Consider the following 538-residue polypeptide: METKNENSDVSRAEEFKSQANEAFKGHKYSSAIDLYTKAIELNSNNAVYWANRAFAHTKLEEYGSAIQDASKAIEVDSRYSKGYYRRGAAYLAMGKFKDALKDFQQVKRLSPNDPDATRKLKECEKAVMKLKFEEAISVPVSERRSVAESIDFHTIGNKPRSSSMPTKTALAAVVAAVMVVAVRGFATTEILMVLVSVVLGTFWWGSFSGKVEPQYSGARIEGEEVTLDFVKTMMEDFKNQKTLHKRYAYQIVLQTRQILLALPSLVDISVPHGKHITVCGDVHGQFYDLLNIFELNGLPSEENPYLFNGDFVDRGSFSVEIILTLFAFKCMCPSSIYLARGNHESKSMNKIYGFEGEVRSKLSEKFVDLFAEVFCYLPLAHVINGKVFVVHGGLFSVDGVKLSDIRAIDRFCEPPEEGLMCELLWSDPQPLPGRGPSKRGVGLSFGGDVTKRFLQDNNLDLLVRSHEVKDEGYEVEHDGKLITVFSAPNYCDQMGNKGAFIRFEAPDMKPNIVTFSAVPHPDVKPMAYANNFLRMFN.

TPR repeat units lie at residues 13-46, 48-80, and 81-114; these read AEEF…NSNN, VYWA…DSRY, and SKGY…SPND. 2 helical membrane passes run 163–183 and 185–205; these read SSMP…VVAV and GFAT…TFWW. Residues aspartate 282, histidine 284, aspartate 311, and asparagine 343 each coordinate Mn(2+). Catalysis depends on histidine 344, which acts as the Proton donor. Positions 392 and 467 each coordinate Mn(2+).

It belongs to the PPP phosphatase family. PP-5 (PP-T) subfamily. Interacts with PHYA and PHYB, mostly when they are phosphorylated and in Pfr forms. Requires Mn(2+) as cofactor.

Its subcellular location is the endoplasmic reticulum membrane. It localises to the nucleus membrane. It is found in the cytoplasm. The protein resides in the nucleus. The protein localises to the nucleoplasm. Its subcellular location is the nucleus speckle. It carries out the reaction O-phospho-L-seryl-[protein] + H2O = L-seryl-[protein] + phosphate. The enzyme catalyses O-phospho-L-threonyl-[protein] + H2O = L-threonyl-[protein] + phosphate. With respect to regulation, activated by arachidonic acid (AA). Isoform 2 dephosphorylates phosphorylated phytochromes, with a preference toward Pfr forms, and enhances phytochrome-mediated photoresponses, probably by enhancing their stability and their binding affinity for light signal transducers such as NDPK2. Can use para-nitrophenylphosphate (pNPP) as substrate. This is Serine/threonine-protein phosphatase 5 (PAPP5) from Arabidopsis thaliana (Mouse-ear cress).